Consider the following 61-residue polypeptide: Small ribosomal subunit protein uS14 (61 aa).

Zn(2+)-binding residues include cysteine 24, cysteine 27, cysteine 40, and cysteine 43.

Belongs to the universal ribosomal protein uS14 family. Zinc-binding uS14 subfamily. As to quaternary structure, part of the 30S ribosomal subunit. Contacts proteins S3 and S10. It depends on Zn(2+) as a cofactor.

Binds 16S rRNA, required for the assembly of 30S particles and may also be responsible for determining the conformation of the 16S rRNA at the A site. In Deinococcus geothermalis (strain DSM 11300 / CIP 105573 / AG-3a), this protein is Small ribosomal subunit protein uS14.